Here is a 322-residue protein sequence, read N- to C-terminus: Beta-ketoacyl-[acyl-carrier-protein] synthase III (322 aa).

Residues Cys113 and His249 contribute to the active site. The ACP-binding stretch occupies residues 250–254 (QANLR). Asn279 is a catalytic residue.

The protein belongs to the thiolase-like superfamily. FabH family. As to quaternary structure, homodimer.

Its subcellular location is the cytoplasm. It catalyses the reaction malonyl-[ACP] + acetyl-CoA + H(+) = 3-oxobutanoyl-[ACP] + CO2 + CoA. The protein operates within lipid metabolism; fatty acid biosynthesis. Catalyzes the condensation reaction of fatty acid synthesis by the addition to an acyl acceptor of two carbons from malonyl-ACP. Catalyzes the first condensation reaction which initiates fatty acid synthesis and may therefore play a role in governing the total rate of fatty acid production. Possesses both acetoacetyl-ACP synthase and acetyl transacylase activities. Its substrate specificity determines the biosynthesis of branched-chain and/or straight-chain of fatty acids. The protein is Beta-ketoacyl-[acyl-carrier-protein] synthase III of Granulibacter bethesdensis (strain ATCC BAA-1260 / CGDNIH1).